The sequence spans 122 residues: Large ribosomal subunit protein uL14 (122 aa).

This sequence belongs to the universal ribosomal protein uL14 family. In terms of assembly, part of the 50S ribosomal subunit. Forms a cluster with proteins L3 and L19. In the 70S ribosome, L14 and L19 interact and together make contacts with the 16S rRNA in bridges B5 and B8.

Its function is as follows. Binds to 23S rRNA. Forms part of two intersubunit bridges in the 70S ribosome. The polypeptide is Large ribosomal subunit protein uL14 (Bifidobacterium adolescentis (strain ATCC 15703 / DSM 20083 / NCTC 11814 / E194a)).